Reading from the N-terminus, the 529-residue chain is Inosine-5'-monophosphate dehydrogenase (529 aa).

CBS domains follow at residues 129-185 (MVTD…SKQV) and 189-246 (MTKT…PLAT). NAD(+) contacts are provided by residues D283 and 334-336 (GVG). Positions 336 and 338 each coordinate K(+). S339 is a binding site for IMP. C341 lines the K(+) pocket. The active-site Thioimidate intermediate is the C341. Residues 374 to 376 (DGG), 397 to 398 (GS), and 421 to 425 (YRGMG) contribute to the IMP site. R443 acts as the Proton acceptor in catalysis. E458 contacts IMP. K(+) contacts are provided by E511, S512, and H513.

This sequence belongs to the IMPDH/GMPR family. In terms of assembly, homotetramer. It depends on K(+) as a cofactor.

The catalysed reaction is IMP + NAD(+) + H2O = XMP + NADH + H(+). Its pathway is purine metabolism; XMP biosynthesis via de novo pathway; XMP from IMP: step 1/1. With respect to regulation, mycophenolic acid (MPA) is a non-competitive inhibitor that prevents formation of the closed enzyme conformation by binding to the same site as the amobile flap. In contrast, mizoribine monophosphate (MZP) is a competitive inhibitor that induces the closed conformation. MPA is a potent inhibitor of mammalian IMPDHs but a poor inhibitor of the bacterial enzymes. MZP is a more potent inhibitor of bacterial IMPDH. Functionally, catalyzes the conversion of inosine 5'-phosphate (IMP) to xanthosine 5'-phosphate (XMP), the first committed and rate-limiting step in the de novo synthesis of guanine nucleotides, and therefore plays an important role in the regulation of cell growth. In Mycobacterium leprae (strain TN), this protein is Inosine-5'-monophosphate dehydrogenase.